The following is a 416-amino-acid chain: Glutamyl-tRNA reductase (416 aa).

Substrate is bound by residues 51 to 54 (TCNR), Ser110, 115 to 117 (EPQ), and Gln121. Catalysis depends on Cys52, which acts as the Nucleophile. 190–195 (GAGQTG) is an NADP(+) binding site.

The protein belongs to the glutamyl-tRNA reductase family. As to quaternary structure, homodimer.

The catalysed reaction is (S)-4-amino-5-oxopentanoate + tRNA(Glu) + NADP(+) = L-glutamyl-tRNA(Glu) + NADPH + H(+). It participates in porphyrin-containing compound metabolism; protoporphyrin-IX biosynthesis; 5-aminolevulinate from L-glutamyl-tRNA(Glu): step 1/2. Its function is as follows. Catalyzes the NADPH-dependent reduction of glutamyl-tRNA(Glu) to glutamate 1-semialdehyde (GSA). The sequence is that of Glutamyl-tRNA reductase from Francisella tularensis subsp. holarctica (strain OSU18).